The following is a 405-amino-acid chain: MADVKKVVLAYSGGLDTSVILKWLQDTYNCEVVTFTADLGQGEEVEPARAKARAMGVKEIYIDDLREEFVRDFVYPMFRANTVYEGEYLLGTSIARPLIAKRLIEIANETGADAISHGATGKGNDQVRFELGAYALKPGVKVIAPWREWDLLSREKLMDYAEKHGIPIERHGKKKSPYSMDANLLHISYEGGVLEDTWTEHEEDMWKWTASPENAPDTPTYIELTYRKGDIVAIDGKDMTPAEVLTELNRVGGINGIGRLDIVENRYVGMKSRGCYETPGGTIMLKAHRAIESITLDREVAHLKDELMPKYASLIYTGYWWSPERLMLQQMIDASQVNVNGVVRLKLYKGNVVVVGRKSDDSLFDANIATFEEDGGAYNQADAAGFIKLNALRMRIAANKGRTLS.

ATP-binding positions include 10–18 (AYSGGLDTS) and Ala37. 2 residues coordinate L-citrulline: Tyr88 and Ser93. Gly118 contacts ATP. L-aspartate-binding residues include Thr120, Asn124, and Asp125. Residue Asn124 participates in L-citrulline binding. L-citrulline-binding residues include Arg128, Ser179, Ser188, Glu264, and Tyr276.

This sequence belongs to the argininosuccinate synthase family. Type 1 subfamily. In terms of assembly, homotetramer.

It is found in the cytoplasm. It catalyses the reaction L-citrulline + L-aspartate + ATP = 2-(N(omega)-L-arginino)succinate + AMP + diphosphate + H(+). The protein operates within amino-acid biosynthesis; L-arginine biosynthesis; L-arginine from L-ornithine and carbamoyl phosphate: step 2/3. In Pseudomonas aeruginosa (strain LESB58), this protein is Argininosuccinate synthase.